The primary structure comprises 385 residues: Chaperone protein DnaJ (385 aa).

Residues 3–68 (DYYEILGVTR…QKRAAYDRFG (66 aa)) enclose the J domain. The CR-type zinc-finger motif lies at 135-213 (GAEVEITVPA…CHGHGQVRRE (79 aa)). Zn(2+)-binding residues include cysteine 148, cysteine 151, cysteine 165, cysteine 168, cysteine 187, cysteine 190, cysteine 201, and cysteine 204. 4 CXXCXGXG motif repeats span residues 148 to 155 (CEVCEGSG), 165 to 172 (CGTCGGAG), 187 to 194 (CPRCGGSG), and 201 to 208 (CSNCHGHG).

Belongs to the DnaJ family. In terms of assembly, homodimer. Zn(2+) is required as a cofactor.

Its subcellular location is the cytoplasm. In terms of biological role, participates actively in the response to hyperosmotic and heat shock by preventing the aggregation of stress-denatured proteins and by disaggregating proteins, also in an autonomous, DnaK-independent fashion. Unfolded proteins bind initially to DnaJ; upon interaction with the DnaJ-bound protein, DnaK hydrolyzes its bound ATP, resulting in the formation of a stable complex. GrpE releases ADP from DnaK; ATP binding to DnaK triggers the release of the substrate protein, thus completing the reaction cycle. Several rounds of ATP-dependent interactions between DnaJ, DnaK and GrpE are required for fully efficient folding. Also involved, together with DnaK and GrpE, in the DNA replication of plasmids through activation of initiation proteins. In Caulobacter vibrioides (strain ATCC 19089 / CIP 103742 / CB 15) (Caulobacter crescentus), this protein is Chaperone protein DnaJ.